The chain runs to 362 residues: MTKKTQVGLIFGGNSSEYEVSITSAGNIYKAIDKDKFDVHPIWITNSGYVASEADSYKVLEEPGYMVEKNDKTANLSNLIELASRPELDVLFPIVHGNLGEDGVLQGLFRLIDKPFVGVDVLAAAVTMDKEFTKILAQRAGVPVAKWVSIKRYEYEDAKNQKLSYDWVSGQLGTSNLFVKPSNQGSSVGITHVTDDSNYAEALAEAFKYDDKVLVEEGIVGTEVETAVLGNDHPVVSGVGQIINADNTWYSYENKYSTESTTTLQIPAQIPAETAEKVQENALKIYQITECSGMARVDSMLRESDGEVIFNELNALPGFTNISMYPKLFEEAGISYPDLITRLIRLAEERYAHKKTLLRKHD.

The region spanning 134–345 (KILAQRAGVP…YPDLITRLIR (212 aa)) is the ATP-grasp domain. 170-225 (GQLGTSNLFVKPSNQGSSVGITHVTDDSNYAEALAEAFKYDDKVLVEEGIVGTEVE) provides a ligand contact to ATP. Residues aspartate 298, glutamate 312, and asparagine 314 each contribute to the Mg(2+) site.

The protein belongs to the D-alanine--D-alanine ligase family. Mg(2+) is required as a cofactor. Mn(2+) serves as cofactor.

It localises to the cytoplasm. The enzyme catalyses 2 D-alanine + ATP = D-alanyl-D-alanine + ADP + phosphate + H(+). It participates in cell wall biogenesis; peptidoglycan biosynthesis. In terms of biological role, cell wall formation. This chain is D-alanine--D-alanine ligase, found in Lactobacillus delbrueckii subsp. bulgaricus (strain ATCC 11842 / DSM 20081 / BCRC 10696 / JCM 1002 / NBRC 13953 / NCIMB 11778 / NCTC 12712 / WDCM 00102 / Lb 14).